Reading from the N-terminus, the 96-residue chain is Large ribosomal subunit protein eL43 (96 aa).

The C4-type zinc-finger motif lies at 41–62 (CPVCAFPKLKRVGTSIWVCDKC).

The protein belongs to the eukaryotic ribosomal protein eL43 family. The cofactor is Zn(2+).

The polypeptide is Large ribosomal subunit protein eL43 (Methanococcus maripaludis (strain C6 / ATCC BAA-1332)).